The sequence spans 1100 residues: Tyrosine-protein kinase JAK3 (1100 aa).

Residues 1–223 (MAPPSEETPL…RRTVVQALRR (223 aa)) form a cytokine/interferon/growth hormone receptors region. Residue S17 is modified to Phosphoserine. Residues 24–353 (GALHVLLPPR…GYFRLICDSR (330 aa)) enclose the FERM domain. In terms of domain architecture, SH2; atypical spans 372–472 (LCHGPITLDF…GTALNLTSCC (101 aa)). A Protein kinase 1 domain is found at 517–777 (LEWHENLGHG…AILRDLNGLI (261 aa)). At Y781 the chain carries Phosphotyrosine; by autocatalysis. The Protein kinase 2 domain maps to 818 to 1091 (LKYISLLGKG…PAFDTLSPQL (274 aa)). ATP-binding positions include 824-832 (LGKGNFGSV) and K851. 2 positions are modified to phosphotyrosine: Y900 and Y935. The active-site Proton acceptor is D945. Phosphotyrosine; by autocatalysis occurs at positions 976 and 977.

The protein belongs to the protein kinase superfamily. Tyr protein kinase family. JAK subfamily. In terms of assembly, interacts with STAM2 and MYO18A. Interacts with SHB. Interacts with CD69. Autophosphorylated, leading to regulate its activity. IL2 promotes phosphorylation on tyrosine residues, including autophosphorylation on Tyr-781. Dephosphorylation of Tyr-976 and Tyr-977 by PTPN2 negatively regulates cytokine-mediated signaling. In contrast with the ubiquitous expression of the other JAKs, JAK3 is predominantly expressed in hematopoietic tissues.

The protein localises to the endomembrane system. The protein resides in the cytoplasm. The enzyme catalyses L-tyrosyl-[protein] + ATP = O-phospho-L-tyrosyl-[protein] + ADP + H(+). Its function is as follows. Non-receptor tyrosine kinase involved in various processes such as cell growth, development, or differentiation. Mediates essential signaling events in both innate and adaptive immunity and plays a crucial role in hematopoiesis during T-cells development. In the cytoplasm, plays a pivotal role in signal transduction via its association with type I receptors sharing the common subunit gamma such as IL2R, IL4R, IL7R, IL9R, IL15R and IL21R. Following ligand binding to cell surface receptors, phosphorylates specific tyrosine residues on the cytoplasmic tails of the receptor, creating docking sites for STATs proteins. Subsequently, phosphorylates the STATs proteins once they are recruited to the receptor. Phosphorylated STATs then form homodimer or heterodimers and translocate to the nucleus to activate gene transcription. For example, upon IL2R activation by IL2, JAK1 and JAK3 molecules bind to IL2R beta (IL2RB) and gamma chain (IL2RG) subunits inducing the tyrosine phosphorylation of both receptor subunits on their cytoplasmic domain. Then, STAT5A and STAT5B are recruited, phosphorylated and activated by JAK1 and JAK3. Once activated, dimerized STAT5 translocates to the nucleus and promotes the transcription of specific target genes in a cytokine-specific fashion. The chain is Tyrosine-protein kinase JAK3 from Rattus norvegicus (Rat).